A 502-amino-acid polypeptide reads, in one-letter code: Probable cytosol aminopeptidase (502 aa).

Mn(2+) is bound by residues Lys269 and Asp274. Lys281 is a catalytic residue. Asp292, Asp351, and Glu353 together coordinate Mn(2+). Arg355 is a catalytic residue.

This sequence belongs to the peptidase M17 family. It depends on Mn(2+) as a cofactor.

Its subcellular location is the cytoplasm. The catalysed reaction is Release of an N-terminal amino acid, Xaa-|-Yaa-, in which Xaa is preferably Leu, but may be other amino acids including Pro although not Arg or Lys, and Yaa may be Pro. Amino acid amides and methyl esters are also readily hydrolyzed, but rates on arylamides are exceedingly low.. It carries out the reaction Release of an N-terminal amino acid, preferentially leucine, but not glutamic or aspartic acids.. Its function is as follows. Presumably involved in the processing and regular turnover of intracellular proteins. Catalyzes the removal of unsubstituted N-terminal amino acids from various peptides. In Shewanella frigidimarina (strain NCIMB 400), this protein is Probable cytosol aminopeptidase.